Reading from the N-terminus, the 374-residue chain is tRNA-specific 2-thiouridylase MnmA (374 aa).

ATP-binding positions include 17–24 and Met43; that span reads GMSGGVDS. The tract at residues 103 to 105 is interaction with target base in tRNA; the sequence is NPD. Cys108 serves as the catalytic Nucleophile. The cysteines at positions 108 and 204 are disulfide-linked. Gly132 lines the ATP pocket. Residues 154–156 are interaction with tRNA; the sequence is KDQ. Cys204 functions as the Cysteine persulfide intermediate in the catalytic mechanism. An interaction with tRNA region spans residues 316–317; that stretch reads RY.

Belongs to the MnmA/TRMU family.

Its subcellular location is the cytoplasm. It carries out the reaction S-sulfanyl-L-cysteinyl-[protein] + uridine(34) in tRNA + AH2 + ATP = 2-thiouridine(34) in tRNA + L-cysteinyl-[protein] + A + AMP + diphosphate + H(+). In terms of biological role, catalyzes the 2-thiolation of uridine at the wobble position (U34) of tRNA, leading to the formation of s(2)U34. The sequence is that of tRNA-specific 2-thiouridylase MnmA from Pseudomonas putida (strain W619).